The primary structure comprises 404 residues: GTPase Obg (404 aa).

The region spanning 1–159 (MKFIDEARIE…RALRLELKVL (159 aa)) is the Obg domain. Residues 22–43 (SFRREKFIPRGGPDGGDGGRGG) form a disordered region. The segment covering 33-43 (GPDGGDGGRGG) has biased composition (gly residues). The region spanning 160–334 (ADVGLLGMPN…LVFAIQDFLD (175 aa)) is the OBG-type G domain. GTP-binding positions include 166 to 173 (GMPNAGKS), 191 to 195 (FTTLA), 213 to 216 (DIPG), 284 to 287 (NKLD), and 315 to 317 (SAL). The Mg(2+) site is built by Ser173 and Thr193. Positions 373–404 (LLAEGETGTGDDGRDGNENDPADEQDTNRPNH) are disordered.

It belongs to the TRAFAC class OBG-HflX-like GTPase superfamily. OBG GTPase family. Monomer. Mg(2+) serves as cofactor.

The protein localises to the cytoplasm. In terms of biological role, an essential GTPase which binds GTP, GDP and possibly (p)ppGpp with moderate affinity, with high nucleotide exchange rates and a fairly low GTP hydrolysis rate. Plays a role in control of the cell cycle, stress response, ribosome biogenesis and in those bacteria that undergo differentiation, in morphogenesis control. The protein is GTPase Obg of Aromatoleum aromaticum (strain DSM 19018 / LMG 30748 / EbN1) (Azoarcus sp. (strain EbN1)).